The following is an 809-amino-acid chain: Cyclic nucleotide-gated channel beta-3 (809 aa).

Disordered regions lie at residues 1–121 and 153–178; these read MFKS…PPAA and GDLS…ESDD. Topologically, residues 1-218 are cytoplasmic; that stretch reads MFKSLTKVNK…SIDSYTDRLY (218 aa). The segment covering 22 to 31 has biased composition (basic and acidic residues); it reads QSSRRNEEGS. A compositionally biased stretch (polar residues) spans 32 to 43; it reads HPSNQSQQTTAQ. Over residues 44-53 the composition is skewed to basic and acidic residues; that stretch reads EENKGEEKSL. A compositionally biased stretch (polar residues) spans 55-88; sequence TKSTPVTSEEPHTNIQDKLSKKNSSGDLTTNPDP. A helical transmembrane segment spans residues 219 to 242; it reads LLWLLLVTLAYNWNCCFIPLRLVF. Topologically, residues 243 to 249 are extracellular; that stretch reads PYQTADN. Residues 250–270 traverse the membrane as a helical segment; it reads IHYWLIADIICDIIYLYDMLF. Residues 271–299 are Cytoplasmic-facing; that stretch reads IQPRLQFVRGGDIIVDSNELRKHYRTSTK. A helical membrane pass occupies residues 300–317; that stretch reads FQLDVASIIPFDICYLFF. The Extracellular portion of the chain corresponds to 318-320; that stretch reads GFN. Residues 321–335 form a helical membrane-spanning segment; the sequence is PMFRANRMLKYTSFF. The Cytoplasmic segment spans residues 336 to 348; sequence EFNHHLESIMDKA. The tract at residues 348 to 447 is ion conduction pathway; the sequence is AYIYRVIRTT…IGQMRDVIGA (100 aa). Residues 349-371 form a helical membrane-spanning segment; sequence YIYRVIRTTGYLLFILHINACVY. The Extracellular segment spans residues 372–393; sequence YWASNYEGIGTTRWVYDGEGNE. Transmembrane regions (helical) follow at residues 394–420 and 421–445; these read YLRC…LFEI and VFQL…RDVI. A selectivity filter region spans residues 407 to 410; that stretch reads TIGG. Over 446–809 the chain is Cytoplasmic; sequence GAATANQNYF…TIEVKEKAKQ (364 aa). The C-linker stretch occupies residues 450–526; it reads ANQNYFRACM…SIISKVDLFK (77 aa). The cyclic nucleotide-binding domain stretch occupies residues 530–646; that stretch reads TQMIYDMLLR…ILMKKARVLL (117 aa). Positions 591, 592, 604, and 605 each coordinate 3',5'-cyclic GMP. Positions 698-776 are disordered; sequence QAAQKKENSE…PHSVRRTVLP (79 aa). A compositionally biased stretch (basic and acidic residues) spans 716–755; it reads NEDKQKENEDKQKENEDKGKENEDKDKGREPEEKPLDRPE.

It belongs to the cyclic nucleotide-gated cation channel (TC 1.A.1.5) family. CNGB3 subfamily. Forms heterotetrameric channels composed of CNGA3 and CNGB3 subunits with 3:1 stoichiometry. In terms of tissue distribution, expressed specifically in the retina.

Its subcellular location is the cell membrane. The enzyme catalyses Ca(2+)(in) = Ca(2+)(out). It catalyses the reaction Na(+)(in) = Na(+)(out). It carries out the reaction K(+)(in) = K(+)(out). The catalysed reaction is NH4(+)(in) = NH4(+)(out). The enzyme catalyses Rb(+)(in) = Rb(+)(out). It catalyses the reaction Li(+)(in) = Li(+)(out). It carries out the reaction Cs(+)(in) = Cs(+)(out). Its function is as follows. Pore-forming subunit of the cone cyclic nucleotide-gated channel. Mediates cone photoresponses at bright light converting transient changes in intracellular cGMP levels into electrical signals. In the dark, cGMP levels are high and keep the channel open enabling a steady inward current carried by Na(+) and Ca(2+) ions that leads to membrane depolarization and neurotransmitter release from synaptic terminals. Upon photon absorption cGMP levels decline leading to channel closure and membrane hyperpolarization that ultimately slows neurotransmitter release and signals the presence of light, the end point of the phototransduction cascade. Conducts cGMP- and cAMP-gated ion currents, with permeability for monovalent and divalent cations. This Homo sapiens (Human) protein is Cyclic nucleotide-gated channel beta-3.